The sequence spans 210 residues: Shikimate kinase (210 aa).

G34–V39 provides a ligand contact to ATP. S38 is a Mg(2+) binding site. Substrate contacts are provided by D56, R80, and G102. R140 contributes to the ATP binding site. R159 is a binding site for substrate.

It belongs to the shikimate kinase family. Monomer. Requires Mg(2+) as cofactor.

Its subcellular location is the cytoplasm. The catalysed reaction is shikimate + ATP = 3-phosphoshikimate + ADP + H(+). It participates in metabolic intermediate biosynthesis; chorismate biosynthesis; chorismate from D-erythrose 4-phosphate and phosphoenolpyruvate: step 5/7. Functionally, catalyzes the specific phosphorylation of the 3-hydroxyl group of shikimic acid using ATP as a cosubstrate. The sequence is that of Shikimate kinase from Bartonella quintana (strain Toulouse) (Rochalimaea quintana).